The sequence spans 525 residues: GMP synthase [glutamine-hydrolyzing] (525 aa).

The Glutamine amidotransferase type-1 domain maps to Arg9–Leu207. Cys86 (nucleophile) is an active-site residue. Residues His181 and Glu183 contribute to the active site. The GMPS ATP-PPase domain occupies Trp208–Arg400. Ser235–Ser241 is a binding site for ATP.

Homodimer.

The catalysed reaction is XMP + L-glutamine + ATP + H2O = GMP + L-glutamate + AMP + diphosphate + 2 H(+). The protein operates within purine metabolism; GMP biosynthesis; GMP from XMP (L-Gln route): step 1/1. In terms of biological role, catalyzes the synthesis of GMP from XMP. In Pseudomonas fluorescens (strain ATCC BAA-477 / NRRL B-23932 / Pf-5), this protein is GMP synthase [glutamine-hydrolyzing].